We begin with the raw amino-acid sequence, 135 residues long: MVKFLKPNKAVILLQGRYAGKKAVIVKTFDDGTREKPYGHCLVAGIKKFPSKVIKKDSAKKTAKKSRVKAFVKLVNYQHLMPTRYTLDVDLKDAVVPDVLQSKDKKVTALKETKKSLEERFKTGKNRWFFTKLRF.

It belongs to the eukaryotic ribosomal protein eL27 family.

The protein is Large ribosomal subunit protein eL27 (RPL27) of Pisum sativum (Garden pea).